The sequence spans 337 residues: Beta-ketoacyl-[acyl-carrier-protein] synthase III (337 aa).

Residues cysteine 119 and histidine 260 contribute to the active site. Residues 261–265 (QANQR) form an ACP-binding region. The active site involves asparagine 290.

This sequence belongs to the thiolase-like superfamily. FabH family. Homodimer.

The protein localises to the cytoplasm. The catalysed reaction is malonyl-[ACP] + acetyl-CoA + H(+) = 3-oxobutanoyl-[ACP] + CO2 + CoA. Its pathway is lipid metabolism; fatty acid biosynthesis. Its function is as follows. Catalyzes the condensation reaction of fatty acid synthesis by the addition to an acyl acceptor of two carbons from malonyl-ACP. Catalyzes the first condensation reaction which initiates fatty acid synthesis and may therefore play a role in governing the total rate of fatty acid production. Possesses both acetoacetyl-ACP synthase and acetyl transacylase activities. Its substrate specificity determines the biosynthesis of branched-chain and/or straight-chain of fatty acids. In Synechococcus sp. (strain WH7803), this protein is Beta-ketoacyl-[acyl-carrier-protein] synthase III.